We begin with the raw amino-acid sequence, 304 residues long: Carbonic anhydrase 5A, mitochondrial (304 aa).

A mitochondrion-targeting transit peptide spans 1–34 (MLRAKMLGRGPYKPLAILRHMGPLCATRPQHWRF). Positions 35–295 (QHSYAEKHSN…LRGRNVRSSF (261 aa)) constitute an Alpha-carbonic anhydrase domain. Zn(2+)-binding residues include His129, His131, and His154.

This sequence belongs to the alpha-carbonic anhydrase family. The cofactor is Zn(2+). As to expression, high in liver, also detected in heart, lung, kidney, spleen and intestine.

It is found in the mitochondrion. The catalysed reaction is hydrogencarbonate + H(+) = CO2 + H2O. Functionally, mitochondrial carbonic anhydrase that catalyzes the reversible conversion of carbon dioxide to bicarbonate/HCO3. Mitochondria are impermeable to HCO3, and thus this intramitochondrial carbonic anhydrase is pivotal in providing HCO3 for multiple mitochondrial enzymes that catalyze the formation of essential metabolites of intermediary metabolism in the urea and Krebs cycles. The chain is Carbonic anhydrase 5A, mitochondrial from Rattus norvegicus (Rat).